The sequence spans 317 residues: Melanocyte-stimulating hormone receptor (317 aa).

Over 1 to 37 (MPMQEPQRRLLDPFNSTRTGTPHLKLSANQTGPWCLH) the chain is Extracellular. N-linked (GlcNAc...) asparagine glycans are attached at residues asparagine 15 and asparagine 29. Residues 38 to 63 (VSIPDGLFLSLGLVSLVENVLVVISI) traverse the membrane as a helical segment. Residues 64–72 (AKNRNLHSP) lie on the Cytoplasmic side of the membrane. A helical membrane pass occupies residues 73 to 93 (MYYFICCLALSDLLVSVSIVL). Over 94–118 (ETTLILVLEAGALATRVTVVQQLDN) the chain is Extracellular. Residues 119–140 (VIDVLICGSMVSSLCFLGAIAV) traverse the membrane as a helical segment. Over 141–163 (DRYISIFYALRYHSIVTLPRARW) the chain is Cytoplasmic. The helical transmembrane segment at 164-183 (AIVAIWVASISSSTLFVAYY) threads the bilayer. The Extracellular portion of the chain corresponds to 184–191 (NHTAVLLC). The chain crosses the membrane as a helical span at residues 192 to 211 (LVTFFLATLALMAVLYVHML). Over 212–240 (ARAHQHAQAIAQLHKRQHLVHQGFRLKGA) the chain is Cytoplasmic. Residues 241–266 (ATLTILLGIFFLCWGPFFLYLTLIVL) form a helical membrane-spanning segment. Over 267–279 (CPKHPTCSCFFKN) the chain is Extracellular. The chain crosses the membrane as a helical span at residues 280–300 (LNLFLALIIFNSIVDPLIYAF). Residues 301–317 (RSQELRMTLKEVLLCSW) are Cytoplasmic-facing. The S-palmitoyl cysteine moiety is linked to residue cysteine 315.

It belongs to the G-protein coupled receptor 1 family. In terms of assembly, interacts with MGRN1, but does not undergo MGRN1-mediated ubiquitination; this interaction competes with GNAS-binding and thus inhibits agonist-induced cAMP production. Interacts with OPN3; the interaction results in a decrease in MC1R-mediated cAMP signaling and ultimately a decrease in melanin production in melanocytes.

It is found in the cell membrane. Receptor for MSH (alpha, beta and gamma) and ACTH. The activity of this receptor is mediated by G proteins which activate adenylate cyclase. Mediates melanogenesis, the production of eumelanin (black/brown) and phaeomelanin (red/yellow), via regulation of cAMP signaling in melanocytes. The polypeptide is Melanocyte-stimulating hormone receptor (MC1R) (Chaetodipus baileyi (Bailey's pocket mouse)).